The following is a 397-amino-acid chain: FAD-dependent monooxygenase trt8 (397 aa).

Y53 is an active-site residue. Residues D145 and A158 each coordinate FAD.

Belongs to the paxM FAD-dependent monooxygenase family. The cofactor is FAD.

It participates in secondary metabolite biosynthesis; terpenoid biosynthesis. In terms of biological role, FAD-dependent monooxygenase; part of the gene cluster that mediates the biosynthesis of terretonin, a fungal meroterpenoid that acts as a mycotoxin. The first step of the pathway is the synthesis of 3,5-dimethylorsellinic acid (DMOA) by the polyketide synthase trt4. DMOA is then prenylated into farnesyl-DMOA by the polyprenyl transferase trt2. Methylation by the methyltransferase trt5 then leads to farnesyl-DMOA methyl ester which is further subject to epoxidation by the FAD-dependent monooxygenase trt8 to yield epoxyfarnesyl-DMOA methyl ester. Cyclization of epoxyfarnesyl-DMOA methyl ester by the terpene cyclase trt1 leads to a tetracycle intermediate which is in turn converted to preterretonin. Dehydrogenase trt9 comes next to transform preterretonin to preterrenoid. The FAD-dependent monooxygenase trt3 is then required for the C-hydroxylation at C16 of preterrenoid to yield terrenoid. The cytochrome P450 trt6 catalyzes three successive oxidations to transform terrenoid into an unstable intermediate, which then undergoes the D-ring expansion and unusual rearrangement of the methoxy group to afford the core skeleton of terretonin. Trt14 catalyzes the D-ring expansion of terretonin involving intramolecular methoxy rearrangement as well as the hydrolysis of the expanded D-ring and the methyl ester moiety. Finally, the nonheme iron-dependent dioxygenase trt7 accomplishes the last two oxidation reactions steps to complete the biosynthesis of terretonin. Terretonin C is produced via spontaneous decarboxylation of the terretonin precursor. Another shunt product of the terretonin biosynthesis is dihydrofarnesyl-DMOA, derived from epoxyfarnesyl-DMOA through hydrolysis of the epoxide. The chain is FAD-dependent monooxygenase trt8 from Aspergillus terreus (strain NIH 2624 / FGSC A1156).